The sequence spans 306 residues: Non-specific ribonucleoside hydrolase RihC (306 aa).

Histidine 235 is an active-site residue.

It belongs to the IUNH family. RihC subfamily.

Functionally, hydrolyzes both purine and pyrimidine ribonucleosides with a broad-substrate specificity. In Salmonella paratyphi B (strain ATCC BAA-1250 / SPB7), this protein is Non-specific ribonucleoside hydrolase RihC.